Consider the following 124-residue polypeptide: Urease subunit beta (124 aa).

It belongs to the urease beta subunit family. Heterotrimer of UreA (gamma), UreB (beta) and UreC (alpha) subunits. Three heterotrimers associate to form the active enzyme.

The protein localises to the cytoplasm. The catalysed reaction is urea + 2 H2O + H(+) = hydrogencarbonate + 2 NH4(+). It participates in nitrogen metabolism; urea degradation; CO(2) and NH(3) from urea (urease route): step 1/1. This chain is Urease subunit beta, found in Halalkalibacterium halodurans (strain ATCC BAA-125 / DSM 18197 / FERM 7344 / JCM 9153 / C-125) (Bacillus halodurans).